The primary structure comprises 463 residues: Asparagine--tRNA ligase (463 aa).

It belongs to the class-II aminoacyl-tRNA synthetase family. As to quaternary structure, homodimer.

It localises to the cytoplasm. It carries out the reaction tRNA(Asn) + L-asparagine + ATP = L-asparaginyl-tRNA(Asn) + AMP + diphosphate + H(+). This Clostridium novyi (strain NT) protein is Asparagine--tRNA ligase.